The following is a 161-amino-acid chain: Allophycocyanin beta subunit (161 aa).

Asn71 is modified (N4-methylasparagine). Cys81 serves as a coordination point for (2R,3E)-phycocyanobilin.

Belongs to the phycobiliprotein family. As to quaternary structure, heterodimer of an alpha and a beta chain. Post-translationally, contains one covalently linked phycocyanobilin chromophore. The chromophore is added by the phycocyanobilin lyase CpcUS.

It is found in the cellular thylakoid membrane. Light-harvesting photosynthetic bile pigment-protein from the phycobiliprotein complex. Allophycocyanin has a maximum absorption at approximately 650 nanometers. This is Allophycocyanin beta subunit (apcB) from Picosynechococcus sp. (strain ATCC 27264 / PCC 7002 / PR-6) (Agmenellum quadruplicatum).